Reading from the N-terminus, the 396-residue chain is Pre-mRNA-splicing regulator WTAP (396 aa).

An N-acetylmethionine modification is found at Met-1. Ser-14 carries the phosphoserine modification. Low complexity-rich tracts occupy residues 240-257 (QQQQ…TTAS), 278-291 (SNGS…SGSG), and 304-316 (PSSP…SSNS). Residues 240 to 396 (QQQQSQASAP…SSVNVQGSVL (157 aa)) form a disordered region. Phosphoserine occurs at positions 305, 306, and 341. Residues 340–356 (DSPTGSENSLTHQSNDT) show a composition bias toward polar residues. Thr-350 carries the post-translational modification Phosphothreonine. Positions 357-368 (DSSHDPQEEKAV) are enriched in basic and acidic residues. Residues 380–396 (HVQNGLDSSVNVQGSVL) show a composition bias toward polar residues. At Ser-388 the chain carries Phosphoserine.

This sequence belongs to the fl(2)d family. Component of the WMM complex, a N6-methyltransferase complex composed of a catalytic subcomplex, named MAC, and of an associated subcomplex, named MACOM. The MAC subcomplex is composed of METTL3 and METTL14. The MACOM subcomplex is composed of WTAP, ZC3H13, CBLL1/HAKAI, VIRMA, and, in some cases of RBM15 (RBM15 or RBM15B). Interacts with WT1. Also a component of a MACOM-like complex, named WTAP complex, composed of WTAP, ZC3H13, CBLL1, VIRMA, RBM15, BCLAF1 and THRAP3. Ubiquitously expressed.

The protein localises to the nucleus speckle. Its subcellular location is the nucleus. It localises to the nucleoplasm. It is found in the cytoplasm. Its function is as follows. Associated component of the WMM complex, a complex that mediates N6-methyladenosine (m6A) methylation of RNAs, a modification that plays a role in the efficiency of mRNA splicing and RNA processing. Required for accumulation of METTL3 and METTL14 to nuclear speckle. Acts as a mRNA splicing regulator. Regulates G2/M cell-cycle transition by binding to the 3' UTR of CCNA2, which enhances its stability. Impairs WT1 DNA-binding ability and inhibits expression of WT1 target genes. The chain is Pre-mRNA-splicing regulator WTAP from Homo sapiens (Human).